The sequence spans 241 residues: Neuroendocrine secretory protein 55 (241 aa).

Residues 1–46 form the signal peptide; the sequence is MDRRSRPQLGRRARHNYNDLCPPIGRRAATALLWLSCSIALLRALA. The segment at 71–241 is disordered; the sequence is AAQVFPEPPE…KRGAIPIRRH (171 aa). Residues 97–125 are compositionally biased toward acidic residues; the sequence is EYQEEEFDYESETESESEIESETEFETES. Positions 167-177 are enriched in low complexity; that stretch reads PDASPSRAPPS. Over residues 182–198 the composition is skewed to basic and acidic residues; that stretch reads ESPRQGEEPEDKDPRDP. Residues 212–221 are compositionally biased toward basic residues; the sequence is QHRCKPKKPT.

The protein belongs to the NESP55 family. Binds keratan sulfate chains. Post-translationally, may be proteolytically processed to give rise to a number of active peptides. As to expression, highly expressed in adrenal medulla and anterior and posterior pituitary. In the brain, detected in hypothalamus, hippocampus, caudate nucleus, thalamus and, in significantly lower amounts, in the cerebellum.

The protein localises to the cytoplasmic vesicle. Its subcellular location is the secretory vesicle. The protein resides in the secreted. This is Neuroendocrine secretory protein 55 from Bos taurus (Bovine).